The chain runs to 180 residues: Nucleoside-triphosphatase THEP1 (180 aa).

ATP-binding positions include Gly-9–Thr-16 and Val-99–Gly-106.

This sequence belongs to the THEP1 NTPase family.

It carries out the reaction a ribonucleoside 5'-triphosphate + H2O = a ribonucleoside 5'-diphosphate + phosphate + H(+). Its function is as follows. Has nucleotide phosphatase activity towards ATP, GTP, CTP, TTP and UTP. May hydrolyze nucleoside diphosphates with lower efficiency. This Methanopyrus kandleri (strain AV19 / DSM 6324 / JCM 9639 / NBRC 100938) protein is Nucleoside-triphosphatase THEP1.